We begin with the raw amino-acid sequence, 1485 residues long: Cystic fibrosis transmembrane conductance regulator (1485 aa).

The Cytoplasmic portion of the chain corresponds to 1–78; the sequence is MQKTPLEKAS…KLINALKRCF (78 aa). Residues 79–99 form a helical membrane-spanning segment; the sequence is FWKFLFYGILLYLGEVTKAVQ. In terms of domain architecture, ABC transmembrane type-1 1 spans 82–366; it reads FLFYGILLYL…WAVQTWYDSL (285 aa). The Extracellular segment spans residues 100–123; it reads PLLLGRIIASYDRDNEHERSIAYY. Residues 124–147 traverse the membrane as a helical segment; that stretch reads LAIGLCLLFVVRMLLLHPAIFGLH. Residues 148 to 196 are Cytoplasmic-facing; that stretch reads HIGMQMRIAMFSLIYKKTLKLSSKVLDKISTGQLVSLLSNNLNKFDEGL. The chain crosses the membrane as a helical span at residues 197–217; the sequence is ALAHFVWIAPLQVLLLMGLLW. Over 218–223 the chain is Extracellular; sequence DLLQAS. The helical transmembrane segment at 224–244 threads the bilayer; the sequence is AFCGLGFLIILSLFQARLGRM. Topologically, residues 245–299 are cytoplasmic; sequence MMKYKDKRAGKINERLVITSQIIENIQSVKAYCWENAMEKIIETIRETELKLTRK. Residues 300 to 320 form a helical membrane-spanning segment; sequence AAYVRYFNSSAFFFSGFFVVF. Topologically, residues 321–340 are extracellular; sequence LSIVPHLLLDGISLRKIFTT. Residues 341 to 359 traverse the membrane as a helical segment; the sequence is ISFSIVLRMAVTRQFPWAV. The Cytoplasmic portion of the chain corresponds to 360–860; that stretch reads QTWYDSLGVI…YLRFLTAHKN (501 aa). Residues W402, S435, 459–466, and Q494 contribute to the ATP site; that span reads GSTGAGKT. Residues 422–647 enclose the ABC transporter 1 domain; it reads ISNEDPSAFF…RPEFSSHLIG (226 aa). Positions 652–833 are disordered R region; that stretch reads NAERRNSIIT…EEINEEDLKE (182 aa). Positions 750–760 are enriched in polar residues; that stretch reads PRSNFLNTGPT. The chain crosses the membrane as a helical span at residues 861–881; it reads FIFILVFCLVIFFVEVAASSA. In terms of domain architecture, ABC transmembrane type-1 2 spans 880-1163; it reads SAWLWIIKRN…ASIDVDSLMR (284 aa). The Extracellular segment spans residues 882–923; the sequence is WLWIIKRNAPAINMTSNENVSEVSDTLSVIVTHTSFYYVFYI. N-linked (GlcNAc...) asparagine glycans are attached at residues N894 and N900. A discontinuously helical transmembrane segment spans residues 924–944; sequence YVGVADSLLALGIFRGLPLVH. Over 945 to 995 the chain is Cytoplasmic; sequence SLISVSKVLHKKMLHAILHAPMSTFNTMRAGRILNRFSKDTAILDDILPLS. A helical transmembrane segment spans residues 996–1016; it reads IFDLTQLVLIVIGAITVVSLL. The Extracellular portion of the chain corresponds to 1017 to 1018; the sequence is EP. Residues 1019–1039 traverse the membrane as a helical segment; the sequence is YIFLATVPVIVAFILLRSYFL. The Cytoplasmic portion of the chain corresponds to 1040-1100; sequence HTSQQLKQLE…TANWFLYLST (61 aa). The helical transmembrane segment at 1101–1121 threads the bilayer; it reads LRWFQMTIEMIFVIFFIAVSF. Topologically, residues 1122–1135 are extracellular; it reads ISIATSGAGEEKVG. A helical transmembrane segment spans residues 1136-1156; that stretch reads IVLTLAMNIMNTLQWAVNASI. The Cytoplasmic segment spans residues 1157–1485; the sequence is DVDSLMRSVS…TEEEVQDTRL (329 aa). One can recognise an ABC transporter 2 domain in the interval 1213 to 1446; it reads MTVKNLSANY…KSFFKQAISH (234 aa). ATP-binding positions include Y1222 and 1247-1254; that span reads GRTGSGKS. The disordered stretch occupies residues 1458-1485; that stretch reads RNSSKRKSRPQISALQEETEEEVQDTRL. A compositionally biased stretch (acidic residues) spans 1474 to 1485; sequence EETEEEVQDTRL. The short motif at 1483–1485 is the PDZ-binding element; sequence TRL.

It belongs to the ABC transporter superfamily. ABCC family. CFTR transporter (TC 3.A.1.202) subfamily. As to quaternary structure, monomer; does not require oligomerization for channel activity. May form oligomers in the membrane. Post-translationally, phosphorylated; cAMP treatment promotes phosphorylation and activates the channel. Dephosphorylation decreases the ATPase activity (in vitro). Phosphorylation at PKA sites activates the channel. Phosphorylation at PKC sites enhances the response to phosphorylation by PKA.

The protein localises to the apical cell membrane. It localises to the early endosome membrane. Its subcellular location is the cell membrane. It is found in the recycling endosome membrane. The protein resides in the endoplasmic reticulum membrane. The enzyme catalyses ATP + H2O + closed Cl(-) channel = ADP + phosphate + open Cl(-) channel.. It carries out the reaction chloride(in) = chloride(out). The catalysed reaction is hydrogencarbonate(in) = hydrogencarbonate(out). It catalyses the reaction ATP + H2O = ADP + phosphate + H(+). Epithelial ion channel that plays an important role in the regulation of epithelial ion and water transport and fluid homeostasis. Mediates the transport of chloride ions across the cell membrane. Possesses an intrinsic ATPase activity and utilizes ATP to gate its channel; the passive flow of anions through the channel is gated by cycles of ATP binding and hydrolysis by the ATP-binding domains. The ion channel is also permeable to HCO(3)(-); selectivity depends on the extracellular chloride concentration. Exerts its function also by modulating the activity of other ion channels and transporters. Contributes to the regulation of the pH and the ion content of the epithelial fluid layer. The polypeptide is Cystic fibrosis transmembrane conductance regulator (Xenopus laevis (African clawed frog)).